The primary structure comprises 104 residues: Photosystem II reaction center Psb28 protein (104 aa).

It belongs to the Psb28 family. Part of the photosystem II complex.

The protein resides in the cellular thylakoid membrane. The chain is Photosystem II reaction center Psb28 protein from Synechococcus sp. (strain JA-3-3Ab) (Cyanobacteria bacterium Yellowstone A-Prime).